Consider the following 196-residue polypeptide: Orotate phosphoribosyltransferase (196 aa).

117–125 (EDIVTTGLS) is a binding site for 5-phospho-alpha-D-ribose 1-diphosphate. Residues Thr-121 and Arg-149 each contribute to the orotate site.

It belongs to the purine/pyrimidine phosphoribosyltransferase family. PyrE subfamily. Homodimer. The cofactor is Mg(2+).

The catalysed reaction is orotidine 5'-phosphate + diphosphate = orotate + 5-phospho-alpha-D-ribose 1-diphosphate. Its pathway is pyrimidine metabolism; UMP biosynthesis via de novo pathway; UMP from orotate: step 1/2. Catalyzes the transfer of a ribosyl phosphate group from 5-phosphoribose 1-diphosphate to orotate, leading to the formation of orotidine monophosphate (OMP). This chain is Orotate phosphoribosyltransferase, found in Methylobacterium sp. (strain 4-46).